The following is a 291-amino-acid chain: MANKQIIDKNDDLQAHTDRNDKPIATIESNHKENKIPDSEKKIVYSTKNLDLWYGENHALKNINLDILENNVTAIIGPSGCGKSTYIKALNRMVELVPSVKTAGKILYRDKNIFDDKHSVEKLRTNVGMVFQQPNPFPKSIYDNITYGPKIHGIKNKKVLDEIVEKSLRGAAIWDELKDRLDTNAYSLSGGQQQRVCIARTLAIEPDVILMDEPTSALDPISTLKVEELVQELKEKYSIIIVTHNMQQAARVSDKTAFFLNGYVNEYDDTDKIFSNPSDKQTEDYISGRFG.

The segment at 1–21 (MANKQIIDKNDDLQAHTDRND) is disordered. Residues 45 to 286 (YSTKNLDLWY…PSDKQTEDYI (242 aa)) enclose the ABC transporter domain. 77–84 (GPSGCGKS) provides a ligand contact to ATP.

Belongs to the ABC transporter superfamily. Phosphate importer (TC 3.A.1.7) family. In terms of assembly, the complex is composed of two ATP-binding proteins (PstB), two transmembrane proteins (PstC and PstA) and a solute-binding protein (PstS).

The protein resides in the cell membrane. The catalysed reaction is phosphate(out) + ATP + H2O = ADP + 2 phosphate(in) + H(+). In terms of biological role, part of the ABC transporter complex PstSACB involved in phosphate import. Responsible for energy coupling to the transport system. The chain is Phosphate import ATP-binding protein PstB from Staphylococcus saprophyticus subsp. saprophyticus (strain ATCC 15305 / DSM 20229 / NCIMB 8711 / NCTC 7292 / S-41).